A 255-amino-acid polypeptide reads, in one-letter code: Imidazole glycerol phosphate synthase subunit HisF (255 aa).

Catalysis depends on residues D11 and D130.

This sequence belongs to the HisA/HisF family. Heterodimer of HisH and HisF.

The protein resides in the cytoplasm. It carries out the reaction 5-[(5-phospho-1-deoxy-D-ribulos-1-ylimino)methylamino]-1-(5-phospho-beta-D-ribosyl)imidazole-4-carboxamide + L-glutamine = D-erythro-1-(imidazol-4-yl)glycerol 3-phosphate + 5-amino-1-(5-phospho-beta-D-ribosyl)imidazole-4-carboxamide + L-glutamate + H(+). Its pathway is amino-acid biosynthesis; L-histidine biosynthesis; L-histidine from 5-phospho-alpha-D-ribose 1-diphosphate: step 5/9. IGPS catalyzes the conversion of PRFAR and glutamine to IGP, AICAR and glutamate. The HisF subunit catalyzes the cyclization activity that produces IGP and AICAR from PRFAR using the ammonia provided by the HisH subunit. This Rhodopseudomonas palustris (strain BisA53) protein is Imidazole glycerol phosphate synthase subunit HisF.